A 217-amino-acid chain; its full sequence is Growth factor receptor-bound protein 2 (217 aa).

Methionine 1 carries the N-acetylmethionine modification. Residues 1-58 (MEAIAKYDFKATADDELSFKRGDILKVLNEECDQNWYKAELNGKDGFIPKNYIEMKPH) enclose the SH3 1 domain. An N6-acetyllysine mark is found at lysine 6, lysine 50, and lysine 109. The 93-residue stretch at 60–152 (WFFGKIPRAK…NQQIFLRDIE (93 aa)) folds into the SH2 domain. Lysine 109 is covalently cross-linked (Glycyl lysine isopeptide (Lys-Gly) (interchain with G-Cter in ubiquitin)). Residues 156-215 (QQPTYVQALFDFDPQEDGELGFRRGDFIHVMDNSDPNWWKGACHGQTGMFPRNYVTPVNR) form the SH3 2 domain. Phosphotyrosine is present on tyrosine 209. Position 211 is a phosphothreonine (threonine 211).

This sequence belongs to the GRB2/sem-5/DRK family. As to quaternary structure, homodimer. Associates (via SH2 domain) with activated EGF and PDGF receptors (tyrosine phosphorylated). Interacts with PDGFRA (tyrosine phosphorylated); the interaction may be indirect. Also associates to other cellular Tyr-phosphorylated proteins such as SIT1, IRS1, IRS2, IRS4, SHC and LNK; probably via the concerted action of both its SH2 and SH3 domains. It also seems to interact with RAS in the signaling pathway leading to DNA synthesis. Interacts with SOS1. Forms a complex with MUC1 and SOS1, through interaction of the SH3 domains with SOS1 and the SH2 domain with phosphorylated MUC1. Interacts with phosphorylated MET. Interacts with phosphorylated TOM1L1. Interacts with the phosphorylated C-terminus of SH2B2. Interacts with phosphorylated SIT1, LAX1, LAT, LAT2 and LIME1 upon TCR and/or BCR activation. Interacts with NISCH, PTPNS1 and REPS2. Interacts with syntrophin SNTA1. Interacts (via SH3 domains) with REPS1. Interacts (via SH3 domains) with PIK3C2B. Interacts with CBL and CBLB. Interacts with AJUBA and CLNK. Interacts (via SH2 domain) with TEK/TIE2 (tyrosine phosphorylated). Interacts with SHB, INPP5D/SHIP1, SKAP1 and SKAP2. Interacts with PTPN11. Interacts with PRNP. Interacts with RALGPS1. Interacts with HCST. Interacts with KDR. Interacts with FLT1 (tyrosine-phosphorylated). Interacts with GAPT and PTPRE. Interacts (via SH2 domain) with KIF26A. Interacts (via SH3 2) with GAB2. Interacts with ADAM15. Interacts with THEMIS2. Interacts (via SH2 domain) with AXL (phosphorylated). Interacts (via SH2 domain) with KIT (phosphorylated). Interacts with PTPRJ and BCR. Interacts with PTPN23. Interacts with FLT4 (tyrosine phosphorylated). Interacts with EPHB1 and SHC1; activates the MAPK/ERK cascade to regulate cell migration. Part of a complex including TNK2, GRB2, LTK and one receptor tyrosine kinase (RTK) such as AXL and PDGFRL, in which GRB2 promotes RTK recruitment by TNK2. Interacts (via SH2 domain) with CSF1R (tyrosine phosphorylated). Interacts with ERBB4. Interacts with NTRK1 (phosphorylated upon ligand-binding). Interacts with PTK2/FAK1 (tyrosine phosphorylated). Interacts with PTK2B/PYK2 (tyrosine phosphorylated). Interacts (via SH3 domains) with GAREM1 isoform 1 (via proline-rich domain and tyrosine phosphorylated); the interaction occurs upon EGF stimulation. Interacts with DAB2. Interacts with TESPA1. Interacts with PLCG1, LAT and THEMIS upon TCR activation in thymocytes; the association is weaker in the absence of TESPA1. Interacts with CD28. Interacts with RAB13; may recruit RAB13 to the leading edge of migrating endothelial cells where it can activate RHOA. Interacts with ASAP3 (phosphorylated form). Interacts (via SH2 domain) with PTPRH (phosphorylated form). Interacts with PTPRO (phosphorylated form). Interacts with PTPRB (phosphorylated form). Interacts (via SH3 domain 2) with PRR14 (via proline-rich region). Interacts with FCRL6 (tyrosine phosphorylated form). Interacts with RHEX (via tyrosine-phosphorylated form). Interacts with DENND2B. Interacts with SPRY2. Interacts with LRRC8A. Interacts with PEAK1. Interacts with CD28. Interacts with FCRL1. Interacts with PCNA. Interacts with CD19. Interacts with BECN1. Interacts with RAD51; the interaction inhibits RAD51 ATPase to stabilize RAD51-DNA complex at stalled replication forks. Interacts with MRE11; this interaction recruits MRE11 to the DNA damage sites. Interacts with RIPK1 ans SQSTM1; these interactions play a critical role in regulating programmed necrosis. Interacts with AGO2; this interaction is important for the formation of a ternary complex containing GRB2, AGO2 and DICER1. Interacts with TIGIT; this interaction inhibits PI3K and MAPK signaling cascades. Interacts with CD226; this interaction leads to activation of VAV1, PI3K and PLCG1. Interacts (via SH2-domain) with SCIMP; this interaction is dependent on phosphorylation of SCIMP 'Tyr-69'. In terms of assembly, interacts with SOS1; this interaction competes with GRB2 to bind SOS1 via its N-terminal SH3 domain. As to quaternary structure, (Microbial infection) Interacts (via SH3 domain) with hepatitis E virus/HEV ORF3 protein. (Microbial infection) Interacts with hepatitis C virus/HCV protein NS5A via its SH3 domains. In terms of assembly, (Microbial infection) Interacts with herpes simplex virus 1 protein UL46. As to quaternary structure, (Microbial infection) Interacts with B19 parvovirus protein 11K. In terms of processing, phosphorylation of Tyr-209 in the C-terminal SH3 domain reduces its binding to SOS1. Ubiquitinated by RNF173, leading to proteasomal degradation and inhibition of the RAF/MEK/ERK pathway. In the nucleus, polyubiquitinated by RBBP6 at Lys-109 at DNA damage sites.

Its subcellular location is the nucleus. It localises to the cytoplasm. The protein localises to the endosome. It is found in the golgi apparatus. In terms of biological role, non-enzymatic adapter protein that plays a pivotal role in precisely regulated signaling cascades from cell surface receptors to cellular responses, including signaling transduction and gene expression. Thus, participates in many biological processes including regulation of innate and adaptive immunity, autophagy, DNA repair or necroptosis. Controls signaling complexes at the T-cell antigen receptor to facilitate the activation, differentiation, and function of T-cells. Mechanistically, engagement of the TCR leads to phosphorylation of the adapter protein LAT, which serves as docking site for GRB2. In turn, GRB2 establishes a a connection with SOS1 that acts as a guanine nucleotide exchange factor and serves as a critical regulator of KRAS/RAF1 leading to MAPKs translocation to the nucleus and activation. Functions also a role in B-cell activation by amplifying Ca(2+) mobilization and activation of the ERK MAP kinase pathway upon recruitment to the phosphorylated B-cell antigen receptor (BCR). Plays a role in switching between autophagy and programmed necrosis upstream of EGFR by interacting with components of necrosomes including RIPK1 and with autophagy regulators SQSTM1 and BECN1. Regulates miRNA biogenesis by forming a functional ternary complex with AGO2 and DICER1. Functions in the replication stress response by protecting DNA at stalled replication forks from MRE11-mediated degradation. Mechanistically, inhibits RAD51 ATPase activity to stabilize RAD51 on stalled replication forks. Additionally, directly recruits and later releases MRE11 at DNA damage sites during the homology-directed repair (HDR) process. Does not bind to phosphorylated epidermal growth factor receptor (EGFR) but inhibits EGF-induced transactivation of a RAS-responsive element. Acts as a dominant negative protein over GRB2 and by suppressing proliferative signals, may trigger active programmed cell death. Mechanistically, inhibits RAS-ERK signaling and downstream cell proliferation by competing with GRB2 for SOS1 binding and thus by regulating SOS1 membrane recruitment. The protein is Growth factor receptor-bound protein 2 (GRB2) of Homo sapiens (Human).